Reading from the N-terminus, the 259-residue chain is MTLLPFTCLILLYSLGSVMSEKTNPNLTLHDVTDKLEGDDEKYATALKTCGEVFAEVEAIFNDENYLSHAGWFKDESNNEGDVVYAKDTPHGRMVTISTELPMPVEDVMKETWNGMEALPEWNQNINFAARIAAPTSNFDIVTYGNNDVLVVSGREFVSARIWRKVGDGFILASRSVTVPSFKSKHKGKVRAHLHLAGARFRPNPENPETTLTDVVMLADLKGYLPKMIVNQVIGRIMIMDTVTNRRHFQNLKAKRTNN.

The signal sequence occupies residues 1-20 (MTLLPFTCLILLYSLGSVMS). The START domain occupies 43–254 (YATALKTCGE…NRRHFQNLKA (212 aa)).

In Caenorhabditis elegans, this protein is Steroidogenic acute regulatory-like protein 1 (strl-1).